Consider the following 363-residue polypeptide: MSKNYHIAVLPGDGIGPEVMTQALKVLDAVRNRFAMRITTSHYDVGGAAIDNHGQPLPPATVEGCEQADAVLFGSVGGPKWEHLPPDQQPERGALLPLRKHFKLFSNLRPAKLYQGLEAFCPLRADIAANGFDILCVRELTGGIYFGQPKGREGSGQYEKAFDTEVYHRFEIERIARIAFESARKRRHKVTSIDKANVLQSSILWREIVNEIATEYPDVELAHMYIDNATMQLIKDPSQFDVLLCSNLFGDILSDECAMITGSMGMLPSASLNEQGFGLYEPAGGSAPDIAGKNIANPIAQILSLALLLRYSLDADDAACAIERAINRALEEGIRTGDLARGAAAVSTDEMGDIIARYVAEGV.

78-91 (GPKWEHLPPDQQPE) contacts NAD(+). Substrate contacts are provided by R99, R109, R138, and D227. Mg(2+) contacts are provided by D227, D251, and D255. Residue 285–297 (GSAPDIAGKNIAN) coordinates NAD(+).

This sequence belongs to the isocitrate and isopropylmalate dehydrogenases family. LeuB type 1 subfamily. In terms of assembly, homodimer. It depends on Mg(2+) as a cofactor. The cofactor is Mn(2+).

It is found in the cytoplasm. The catalysed reaction is (2R,3S)-3-isopropylmalate + NAD(+) = 4-methyl-2-oxopentanoate + CO2 + NADH. It participates in amino-acid biosynthesis; L-leucine biosynthesis; L-leucine from 3-methyl-2-oxobutanoate: step 3/4. With respect to regulation, requires K(+) ions for optimum activity. Functionally, catalyzes the oxidation of 3-carboxy-2-hydroxy-4-methylpentanoate (3-isopropylmalate) to 3-carboxy-4-methyl-2-oxopentanoate. The product decarboxylates to 4-methyl-2 oxopentanoate. This is 3-isopropylmalate dehydrogenase from Escherichia coli (strain K12).